We begin with the raw amino-acid sequence, 260 residues long: Global transcriptional regulator CodY (260 aa).

The GAF domain stretch occupies residues 1–159 (MPNLLEKTRK…SSTVVGIQLL (159 aa)). The H-T-H motif DNA-binding region spans 207-226 (ASVIADRIGITRSVIVNALR).

It belongs to the CodY family.

It is found in the cytoplasm. In terms of biological role, DNA-binding global transcriptional regulator which is involved in the adaptive response to starvation and acts by directly or indirectly controlling the expression of numerous genes in response to nutrient availability. During rapid exponential growth, CodY is highly active and represses genes whose products allow adaptation to nutrient depletion. The chain is Global transcriptional regulator CodY from Streptococcus pyogenes serotype M1.